We begin with the raw amino-acid sequence, 189 residues long: NADH-quinone oxidoreductase subunit B (189 aa).

[4Fe-4S] cluster is bound by residues Cys39, Cys40, Cys104, and Cys135.

Belongs to the complex I 20 kDa subunit family. As to quaternary structure, NDH-1 is composed of 14 different subunits. Subunits NuoB, C, D, E, F, and G constitute the peripheral sector of the complex. It depends on [4Fe-4S] cluster as a cofactor.

The protein localises to the cell inner membrane. The catalysed reaction is a quinone + NADH + 5 H(+)(in) = a quinol + NAD(+) + 4 H(+)(out). Functionally, NDH-1 shuttles electrons from NADH, via FMN and iron-sulfur (Fe-S) centers, to quinones in the respiratory chain. The immediate electron acceptor for the enzyme in this species is believed to be a menaquinone. Couples the redox reaction to proton translocation (for every two electrons transferred, four hydrogen ions are translocated across the cytoplasmic membrane), and thus conserves the redox energy in a proton gradient. This Chlorobium limicola (strain DSM 245 / NBRC 103803 / 6330) protein is NADH-quinone oxidoreductase subunit B.